A 251-amino-acid chain; its full sequence is MSDALPMSPAEFEQALRAKGAYYHIHHPYHVAMYQGRATREQIQGWVANRFYYQVNIPMKDAAILANCPDREVRREWIQRLLDHDGAPGEDGGIEAWLRLGQAVGLDPDQLRSQELVLPGVRFAVDAYVNFARRASWQEAASSSLTELFAPQIHQSRLDSWPQHYPWIDPAGYEYFRTRLGQARRDVEHGLAITLQHYTTRAGQERMLEILQFKLDILWSMLDAMSMAYELNRPPYHSVTQERMWHKGITL.

It belongs to the PqqC family.

It catalyses the reaction 6-(2-amino-2-carboxyethyl)-7,8-dioxo-1,2,3,4,7,8-hexahydroquinoline-2,4-dicarboxylate + 3 O2 = pyrroloquinoline quinone + 2 H2O2 + 2 H2O + H(+). It participates in cofactor biosynthesis; pyrroloquinoline quinone biosynthesis. Functionally, ring cyclization and eight-electron oxidation of 3a-(2-amino-2-carboxyethyl)-4,5-dioxo-4,5,6,7,8,9-hexahydroquinoline-7,9-dicarboxylic-acid to PQQ. In Pseudomonas putida (strain ATCC 700007 / DSM 6899 / JCM 31910 / BCRC 17059 / LMG 24140 / F1), this protein is Pyrroloquinoline-quinone synthase.